We begin with the raw amino-acid sequence, 402 residues long: DNA replication and repair protein RecF (402 aa).

30-37 (GYNGIGKT) contacts ATP.

It belongs to the RecF family.

The protein resides in the cytoplasm. In terms of biological role, the RecF protein is involved in DNA metabolism; it is required for DNA replication and normal SOS inducibility. RecF binds preferentially to single-stranded, linear DNA. It also seems to bind ATP. This Pseudarthrobacter chlorophenolicus (strain ATCC 700700 / DSM 12829 / CIP 107037 / JCM 12360 / KCTC 9906 / NCIMB 13794 / A6) (Arthrobacter chlorophenolicus) protein is DNA replication and repair protein RecF.